A 398-amino-acid polypeptide reads, in one-letter code: Beta-1,4-galactosyltransferase 1 (398 aa).

The Cytoplasmic segment spans residues 1–24 (MRLREPLLSGSAAMPGASLQRACR). Residues 25–44 (LLVAVCALHLGVTLVYYLAG) form a helical; Signal-anchor for type II membrane protein membrane-spanning segment. Over 45–398 (RDLSRLPQLV…QITVDIGTPS (354 aa)) the chain is Lumenal. The segment covering 61-76 (QGGSNSAAAIGQSSGE) has biased composition (polar residues). Positions 61 to 117 (QGGSNSAAAIGQSSGELRTGGARPPPPLGASSQPRPGGDSSPVVDSGPGPASNLTSV) are disordered. The N-linked (GlcNAc...) asparagine glycan is linked to N113. The cysteines at positions 130 and 172 are disulfide-linked. UDP-alpha-D-galactose contacts are provided by residues 183-187 (PFRNR), 222-224 (FNR), 249-250 (VD), and W310. Cysteines 243 and 262 form a disulfide. Residue D250 coordinates Mn(2+). 312-315 (GEDD) provides a ligand contact to N-acetyl-D-glucosamine. H343 lines the Mn(2+) pocket. UDP-alpha-D-galactose is bound at residue 343–346 (HSRD). Residue R355 participates in N-acetyl-D-glucosamine binding.

This sequence belongs to the glycosyltransferase 7 family. As to quaternary structure, homodimer; and heterodimer with alpha-lactalbumin to form lactose synthase. Interacts (via N-terminal cytoplasmic domain) with UBE2Q1 (via N-terminus); the interaction is direct. Mn(2+) serves as cofactor. In terms of processing, the soluble form derives from the membrane forms by proteolytic processing. In terms of tissue distribution, ubiquitously expressed, but at very low levels in fetal and adult brain.

The protein localises to the golgi apparatus. It is found in the golgi stack membrane. The protein resides in the cell membrane. Its subcellular location is the cell surface. It localises to the cell projection. The protein localises to the filopodium. It is found in the secreted. The catalysed reaction is D-glucose + UDP-alpha-D-galactose = lactose + UDP + H(+). The enzyme catalyses an N-acetyl-beta-D-glucosaminyl derivative + UDP-alpha-D-galactose = a beta-D-galactosyl-(1-&gt;4)-N-acetyl-beta-D-glucosaminyl derivative + UDP + H(+). It catalyses the reaction N-acetyl-D-glucosamine + UDP-alpha-D-galactose = beta-D-galactosyl-(1-&gt;4)-N-acetyl-D-glucosamine + UDP + H(+). It carries out the reaction a beta-D-GlcNAc-(1-&gt;3)-beta-D-Gal-(1-&gt;4)-beta-D-Glc-(1&lt;-&gt;1)-Cer(d18:1(4E)) + UDP-alpha-D-galactose = a neolactoside nLc4Cer(d18:1(4E)) + UDP + H(+). The catalysed reaction is a beta-D-glucosylceramide + UDP-alpha-D-galactose = a beta-D-galactosyl-(1-&gt;4)-beta-D-glucosyl-(1&lt;-&gt;1)-ceramide + UDP + H(+). The enzyme catalyses a neolactoside IV(3)-beta-GlcNAc-nLc4Cer + UDP-alpha-D-galactose = a neolactoside nLc6Cer + UDP + H(+). It participates in protein modification; protein glycosylation. The Golgi complex form catalyzes the production of lactose in the lactating mammary gland and could also be responsible for the synthesis of complex-type N-linked oligosaccharides in many glycoproteins as well as the carbohydrate moieties of glycolipids. Its function is as follows. The cell surface form functions as a recognition molecule during a variety of cell to cell and cell to matrix interactions, as those occurring during development and egg fertilization, by binding to specific oligosaccharide ligands on opposing cells or in the extracellular matrix. In Homo sapiens (Human), this protein is Beta-1,4-galactosyltransferase 1.